We begin with the raw amino-acid sequence, 503 residues long: MKLFILIILSICLALVNSQQGVYPDSGVYVSLNSNFLATFGNEFTQTIQNQINSYPVANVDGKTGKVSYSVTNIQQSVQLGDFFFQQTGVNTYNIGWNSVTFTITTDYQGCYKIGGLKKLSICEKGDIKINSQATLSLSIAMTIDFTQSTPTISCSSTTLNVPANGINYNVHCSSKVCDKTHDITNEIASKFVPSVESGMTTEINNNVGKYLSLFPSLRDMNMEYNGNEFYLDSRGTIVESSQGGVLTPTMVLAMNGGIVVKNSAGQFIYPTQSPSSLPSEEAVEDFQTDIAVTLTPYLFESLVDAMFESALPMTITPSEVPSESPVHLNTSDPFFNQTAPGLTGKYPNSPIDVEIISPSSSSQTMVSINSTGVLVGLHSIPVNFIVNDETVFQILFNFNIELTPALSQSSNGISVTGTLDKLDALVTVGSTSVGDIDVSGFVQLIELAQGLVKIPTITIQNPLTTYSLSDLSLSIGDQYIQILGNLQQQQQQQQKQKQILIK.

Residues 1 to 18 form the signal peptide; that stretch reads MKLFILIILSICLALVNS. N-linked (GlcNAc...) asparagine glycosylation is found at Asn330, Asn337, and Asn370.

This sequence belongs to the UPF0522 family.

Its subcellular location is the secreted. In Dictyostelium discoideum (Social amoeba), this protein is UPF0522 protein C.